The following is a 99-amino-acid chain: Protein translation factor SUI1 homolog (99 aa).

The protein belongs to the SUI1 family.

The protein is Protein translation factor SUI1 homolog of Picrophilus torridus (strain ATCC 700027 / DSM 9790 / JCM 10055 / NBRC 100828 / KAW 2/3).